The chain runs to 100 residues: Urease subunit gamma (100 aa).

Belongs to the urease gamma subunit family. As to quaternary structure, heterotrimer of UreA (gamma), UreB (beta) and UreC (alpha) subunits. Three heterotrimers associate to form the active enzyme.

The protein localises to the cytoplasm. It carries out the reaction urea + 2 H2O + H(+) = hydrogencarbonate + 2 NH4(+). The protein operates within nitrogen metabolism; urea degradation; CO(2) and NH(3) from urea (urease route): step 1/1. In Granulibacter bethesdensis (strain ATCC BAA-1260 / CGDNIH1), this protein is Urease subunit gamma.